The chain runs to 377 residues: Spermidine/putrescine import ATP-binding protein PotA (377 aa).

Residues 18 to 248 (IRLSGISKSF…PKNLFVARFI (231 aa)) form the ABC transporter domain. Residue 50–57 (GPSGCGKT) coordinates ATP.

Belongs to the ABC transporter superfamily. Spermidine/putrescine importer (TC 3.A.1.11.1) family. The complex is composed of two ATP-binding proteins (PotA), two transmembrane proteins (PotB and PotC) and a solute-binding protein (PotD).

The protein resides in the cell inner membrane. It carries out the reaction ATP + H2O + polyamine-[polyamine-binding protein]Side 1 = ADP + phosphate + polyamineSide 2 + [polyamine-binding protein]Side 1.. Functionally, part of the ABC transporter complex PotABCD involved in spermidine/putrescine import. Responsible for energy coupling to the transport system. This Vibrio cholerae serotype O1 (strain ATCC 39315 / El Tor Inaba N16961) protein is Spermidine/putrescine import ATP-binding protein PotA.